Reading from the N-terminus, the 295-residue chain is 4-hydroxy-tetrahydrodipicolinate synthase (295 aa).

Residue threonine 46 participates in pyruvate binding. The active-site Proton donor/acceptor is the tyrosine 135. The Schiff-base intermediate with substrate role is filled by lysine 164. A pyruvate-binding site is contributed by isoleucine 205.

This sequence belongs to the DapA family. Homotetramer; dimer of dimers.

It localises to the cytoplasm. It catalyses the reaction L-aspartate 4-semialdehyde + pyruvate = (2S,4S)-4-hydroxy-2,3,4,5-tetrahydrodipicolinate + H2O + H(+). Its pathway is amino-acid biosynthesis; L-lysine biosynthesis via DAP pathway; (S)-tetrahydrodipicolinate from L-aspartate: step 3/4. In terms of biological role, catalyzes the condensation of (S)-aspartate-beta-semialdehyde [(S)-ASA] and pyruvate to 4-hydroxy-tetrahydrodipicolinate (HTPA). The polypeptide is 4-hydroxy-tetrahydrodipicolinate synthase (Wolinella succinogenes (strain ATCC 29543 / DSM 1740 / CCUG 13145 / JCM 31913 / LMG 7466 / NCTC 11488 / FDC 602W) (Vibrio succinogenes)).